Reading from the N-terminus, the 354-residue chain is Uroporphyrinogen decarboxylase (354 aa).

Substrate-binding positions include 27–31 (RQAGR), Asp77, Tyr154, Thr209, and His327.

It belongs to the uroporphyrinogen decarboxylase family. As to quaternary structure, homodimer.

The protein localises to the cytoplasm. The enzyme catalyses uroporphyrinogen III + 4 H(+) = coproporphyrinogen III + 4 CO2. Its pathway is porphyrin-containing compound metabolism; protoporphyrin-IX biosynthesis; coproporphyrinogen-III from 5-aminolevulinate: step 4/4. In terms of biological role, catalyzes the decarboxylation of four acetate groups of uroporphyrinogen-III to yield coproporphyrinogen-III. The chain is Uroporphyrinogen decarboxylase from Klebsiella pneumoniae subsp. pneumoniae (strain ATCC 700721 / MGH 78578).